The chain runs to 791 residues: KN motif and ankyrin repeat domain-containing protein 3 (791 aa).

Disordered regions lie at residues 1 to 37, 56 to 181, 254 to 312, 401 to 425, and 463 to 514; these read MAKF…SVET, RGPA…GPAQ, ATSD…ETRE, GCTE…GDEM, and YESS…GDCE. Residues 25–34 show a composition bias toward polar residues; it reads SARSPSSPYS. Low complexity predominate over residues 105–125; the sequence is LSPGAFPGLSLPPLSPRSLSR. Over residues 127–149 the composition is skewed to basic and acidic residues; it reads PRVEHTLLETSRRLEQAQARERA. Residues serine 151, serine 159, serine 163, serine 166, serine 167, and serine 176 each carry the phosphoserine modification. A compositionally biased stretch (low complexity) spans 158-180; the sequence is RSPRGSGRSSPAPNPALASPGPA. Residues 180-229 adopt a coiled-coil conformation; the sequence is AQLQLVREQMAAALRRLRELEDQARALPELQEQVRALRAEKARLLAGRVQ. 2 stretches are compositionally biased toward basic and acidic residues: residues 254 to 280 and 293 to 312; these read ATSD…RRSE and PDGE…ETRE. Residue serine 279 is modified to Phosphoserine. Residues 401–410 show a composition bias toward polar residues; sequence GCTEKTTQTE. The segment covering 485–496 has biased composition (low complexity); sequence SSSSGSDDSSGG. The segment covering 505–514 has biased composition (basic and acidic residues); sequence HNDKDAGDCE. 5 ANK repeats span residues 606–636, 640–677, 679–708, 712–742, and 746–775; these read NGNT…DVNH, AGYS…AKAS, TGQT…DVNV, DGAT…DLTI, and EGTS…SNHQ. A compositionally biased stretch (polar residues) spans 772–783; the sequence is SNHQGQSSTGSP. Residues 772–791 form a disordered region; the sequence is SNHQGQSSTGSPTAKECNDK.

May be involved in the control of cytoskeleton formation by regulating actin polymerization. In Mus musculus (Mouse), this protein is KN motif and ankyrin repeat domain-containing protein 3.